The chain runs to 155 residues: Transcription antitermination protein NusB (155 aa).

It belongs to the NusB family.

Its function is as follows. Involved in transcription antitermination. Required for transcription of ribosomal RNA (rRNA) genes. Binds specifically to the boxA antiterminator sequence of the ribosomal RNA (rrn) operons. The sequence is that of Transcription antitermination protein NusB from Mesorhizobium japonicum (strain LMG 29417 / CECT 9101 / MAFF 303099) (Mesorhizobium loti (strain MAFF 303099)).